A 307-amino-acid chain; its full sequence is MLQQRSLKTLTRAVGVGLHSGQRVELTLRPAQPDTGIVFRRVDLPQPVDIPVRAEAVTDTRLASTIAQGSAKVHTVEHLMSACAGLGIDNLHVDITAEEVPILDGSSASFVFLLQSAGIVRQNAPKRFIRVTRPVQVREGEGADAKWAQLAPYHGYKLSFEIGFDHPAVDATGQRVEFDLGRGNYRRDIARARTFGFTRDVELMRANGLALGGGLDNAIVMDDYKVLNSDGLRYDDEFVKHKILDAMGDLHLLGKPLLAAYSAFRSGHALNNRLLRALLAQRDAWEVVTFEDERQAPGGFAQPAQAW.

Residues His78, His241, and Asp245 each contribute to the Zn(2+) site. Catalysis depends on His268, which acts as the Proton donor.

This sequence belongs to the LpxC family. Zn(2+) serves as cofactor.

The catalysed reaction is a UDP-3-O-[(3R)-3-hydroxyacyl]-N-acetyl-alpha-D-glucosamine + H2O = a UDP-3-O-[(3R)-3-hydroxyacyl]-alpha-D-glucosamine + acetate. The protein operates within glycolipid biosynthesis; lipid IV(A) biosynthesis; lipid IV(A) from (3R)-3-hydroxytetradecanoyl-[acyl-carrier-protein] and UDP-N-acetyl-alpha-D-glucosamine: step 2/6. In terms of biological role, catalyzes the hydrolysis of UDP-3-O-myristoyl-N-acetylglucosamine to form UDP-3-O-myristoylglucosamine and acetate, the committed step in lipid A biosynthesis. The polypeptide is UDP-3-O-acyl-N-acetylglucosamine deacetylase (Verminephrobacter eiseniae (strain EF01-2)).